Reading from the N-terminus, the 417-residue chain is Imidazolonepropionase (417 aa).

Fe(3+) contacts are provided by His-80 and His-82. His-80 and His-82 together coordinate Zn(2+). 3 residues coordinate 4-imidazolone-5-propanoate: Arg-89, Tyr-152, and His-187. Tyr-152 is a binding site for N-formimidoyl-L-glutamate. His-252 contributes to the Fe(3+) binding site. His-252 contributes to the Zn(2+) binding site. Position 255 (Glu-255) interacts with 4-imidazolone-5-propanoate. Asp-326 lines the Fe(3+) pocket. Asp-326 provides a ligand contact to Zn(2+). Positions 328 and 330 each coordinate N-formimidoyl-L-glutamate. Residue Ser-331 participates in 4-imidazolone-5-propanoate binding.

Belongs to the metallo-dependent hydrolases superfamily. HutI family. The cofactor is Zn(2+). Requires Fe(3+) as cofactor.

The protein localises to the cytoplasm. The enzyme catalyses 4-imidazolone-5-propanoate + H2O = N-formimidoyl-L-glutamate. The protein operates within amino-acid degradation; L-histidine degradation into L-glutamate; N-formimidoyl-L-glutamate from L-histidine: step 3/3. Functionally, catalyzes the hydrolytic cleavage of the carbon-nitrogen bond in imidazolone-5-propanoate to yield N-formimidoyl-L-glutamate. It is the third step in the universal histidine degradation pathway. The sequence is that of Imidazolonepropionase from Bacteroides thetaiotaomicron (strain ATCC 29148 / DSM 2079 / JCM 5827 / CCUG 10774 / NCTC 10582 / VPI-5482 / E50).